Reading from the N-terminus, the 404-residue chain is Exodeoxyribonuclease 7 large subunit (404 aa).

The protein belongs to the XseA family. Heterooligomer composed of large and small subunits.

It is found in the cytoplasm. The catalysed reaction is Exonucleolytic cleavage in either 5'- to 3'- or 3'- to 5'-direction to yield nucleoside 5'-phosphates.. In terms of biological role, bidirectionally degrades single-stranded DNA into large acid-insoluble oligonucleotides, which are then degraded further into small acid-soluble oligonucleotides. The chain is Exodeoxyribonuclease 7 large subunit from Ruminiclostridium cellulolyticum (strain ATCC 35319 / DSM 5812 / JCM 6584 / H10) (Clostridium cellulolyticum).